We begin with the raw amino-acid sequence, 436 residues long: Serine protease hepsin (436 aa).

The segment at Met1–Ala29 is disordered. The Cytoplasmic portion of the chain corresponds to Met1–Ala38. The chain crosses the membrane as a helical; Signal-anchor for type II membrane protein span at residues Ala39 to Val59. Over Thr60 to Pro436 the chain is Extracellular. Residues Val73–Gln170 enclose the SRCR domain. Cystine bridges form between Cys96–Cys159, Cys109–Cys169, Cys138–Cys157, Cys172–Cys296, Cys207–Cys223, Cys310–Cys378, Cys341–Cys357, and Cys368–Cys400. Residue Asn131 is glycosylated (N-linked (GlcNAc...) asparagine). The Peptidase S1 domain maps to Ile182–Lys424. Catalysis depends on charge relay system residues His222 and Asp276. Catalysis depends on Ser372, which acts as the Charge relay system.

The protein belongs to the peptidase S1 family. In terms of tissue distribution, detected in kidney, in thick ascending tubule epithelial cells (at protein level). Detected in kidney and liver.

The protein localises to the apical cell membrane. It localises to the cell membrane. Its subcellular location is the secreted. The catalysed reaction is Cleavage after basic amino-acid residues, with Arg strongly preferred to Lys.. Serine protease that cleaves extracellular substrates, and contributes to the proteolytic processing of growth factors, such as HGF and MST1/HGFL. Plays a role in cell growth and maintenance of cell morphology. Plays a role in the proteolytic processing of ACE2. Mediates the proteolytic cleavage of urinary UMOD that is required for UMOD polymerization. In Mus musculus (Mouse), this protein is Serine protease hepsin (Hpn).